Consider the following 314-residue polypeptide: DNA-directed RNA polymerase subunit alpha (314 aa).

The alpha N-terminal domain (alpha-NTD) stretch occupies residues Met-1–Asn-228. The interval Lys-245–Asp-314 is alpha C-terminal domain (alpha-CTD).

Belongs to the RNA polymerase alpha chain family. Homodimer. The RNAP catalytic core consists of 2 alpha, 1 beta, 1 beta' and 1 omega subunit. When a sigma factor is associated with the core the holoenzyme is formed, which can initiate transcription.

The catalysed reaction is RNA(n) + a ribonucleoside 5'-triphosphate = RNA(n+1) + diphosphate. Its function is as follows. DNA-dependent RNA polymerase catalyzes the transcription of DNA into RNA using the four ribonucleoside triphosphates as substrates. The chain is DNA-directed RNA polymerase subunit alpha from Pediococcus pentosaceus (strain ATCC 25745 / CCUG 21536 / LMG 10740 / 183-1w).